A 1271-amino-acid polypeptide reads, in one-letter code: Chitin synthase 4 (1271 aa).

Disordered regions lie at residues Met-1–His-45 and Pro-58–Ser-117. Polar residues predominate over residues Ala-21–Ala-30. 2 helical membrane-spanning segments follow: residues Trp-165–Leu-185 and Leu-201–Phe-221. A glycan (N-linked (GlcNAc...) asparagine) is linked at Asn-407. A helical transmembrane segment spans residues Leu-473–Leu-493. Residues Asn-713 and Asn-836 are each glycosylated (N-linked (GlcNAc...) asparagine). A run of 3 helical transmembrane segments spans residues Leu-867 to Val-887, Ile-894 to Ile-914, and Phe-919 to Leu-939. The segment at His-999–Pro-1081 is disordered. Residues Arg-1027–Glu-1037 show a composition bias toward polar residues. Residues Asn-1055 and Asn-1161 are each glycosylated (N-linked (GlcNAc...) asparagine). The DEK-C domain maps to Glu-1213–Ser-1269.

This sequence belongs to the chitin synthase family.

The protein localises to the cell membrane. It carries out the reaction [(1-&gt;4)-N-acetyl-beta-D-glucosaminyl](n) + UDP-N-acetyl-alpha-D-glucosamine = [(1-&gt;4)-N-acetyl-beta-D-glucosaminyl](n+1) + UDP + H(+). Functionally, polymerizes chitin, a structural polymer of the cell wall and septum, by transferring the sugar moiety of UDP-GlcNAc to the non-reducing end of the growing chitin polymer. Produces a large proportion of the chitin that is not deacetylated to chitosan. This is Chitin synthase 4 from Cryptococcus neoformans var. grubii serotype A (strain H99 / ATCC 208821 / CBS 10515 / FGSC 9487) (Filobasidiella neoformans var. grubii).